Reading from the N-terminus, the 329-residue chain is Porphobilinogen deaminase (329 aa).

Cys-250 carries the S-(dipyrrolylmethanemethyl)cysteine modification.

The protein belongs to the HMBS family. As to quaternary structure, monomer. Dipyrromethane serves as cofactor.

The catalysed reaction is 4 porphobilinogen + H2O = hydroxymethylbilane + 4 NH4(+). The protein operates within porphyrin-containing compound metabolism; protoporphyrin-IX biosynthesis; coproporphyrinogen-III from 5-aminolevulinate: step 2/4. Functionally, tetrapolymerization of the monopyrrole PBG into the hydroxymethylbilane pre-uroporphyrinogen in several discrete steps. This chain is Porphobilinogen deaminase, found in Burkholderia thailandensis (strain ATCC 700388 / DSM 13276 / CCUG 48851 / CIP 106301 / E264).